Reading from the N-terminus, the 221-residue chain is Transmembrane protein 267 (221 aa).

The next 5 membrane-spanning stretches (helical) occupy residues 28–48 (ASAG…LPFI), 57–77 (LFDN…VIGL), 86–106 (VILA…MAGS), 121–141 (LHCS…MWAC), and 182–204 (ISYW…LMYL).

It is found in the membrane. This Danio rerio (Zebrafish) protein is Transmembrane protein 267 (tmem267).